Consider the following 906-residue polypeptide: Rho GTPase-activating protein gacJ (906 aa).

Positions 53–117 (LEGHLNPSSH…RDNSRSDNIR (65 aa)) are disordered. The span at 69–79 (NNNNNNNNNNN) shows a compositional bias: low complexity. Positions 92 to 117 (SRSDSKHHNRENSKSDRDNSRSDNIR) are enriched in basic and acidic residues. One can recognise a Rho-GAP domain in the interval 161–348 (EELQSLYPDQ…YMLEYFNDIF (188 aa)). Disordered stretches follow at residues 368-415 (DTTS…SRSK), 452-864 (EIIP…SVLT), and 877-906 (ANQAKKNPLSNSGGLKQISPDLIKSNNINK). Positions 381–404 (NGGSPRTSNTPYQQQHQLSSQSMA) are enriched in polar residues. The span at 461-487 (TTTTTTTTTNTTTTTTTTNTTPNNTTT) shows a compositional bias: low complexity. Pro residues-rich tracts occupy residues 494–510 (PVPPKPNLIPRKLPPNP) and 547–560 (QPPPPRKPTSPSPP). The span at 565-574 (KPTSKSDFIP) shows a compositional bias: polar residues. 2 stretches are compositionally biased toward low complexity: residues 575-597 (STNNNLNNNNTTTTTSSLISIPK) and 613-629 (IEEPINPNLNINSTTTT). Positions 637 to 649 (FKNNGTISSGSKS) are enriched in polar residues. Composition is skewed to low complexity over residues 650-663 (NPNLQNLLNTNQPL) and 683-694 (SKPITTTPTIKK). Residues 708-721 (PPSPSSSSPSPPHN) show a composition bias toward pro residues. Low complexity-rich tracts occupy residues 754–772 (PTIPTQTTTASSSSTPTTP), 785–816 (PPINTSQTNNNISNSSIPSPKSKSALSLSTPK), and 844–861 (SSPTSSSPLQSPKISSPS). Residues 880 to 890 (AKKNPLSNSGG) are compositionally biased toward polar residues.

The protein localises to the cytoplasm. Functionally, rho GTPase-activating protein involved in the signal transduction pathway. This Dictyostelium discoideum (Social amoeba) protein is Rho GTPase-activating protein gacJ (gacJ).